The following is a 148-amino-acid chain: Ribosome maturation factor RimP (148 aa).

Belongs to the RimP family.

It is found in the cytoplasm. Its function is as follows. Required for maturation of 30S ribosomal subunits. This chain is Ribosome maturation factor RimP, found in Treponema denticola (strain ATCC 35405 / DSM 14222 / CIP 103919 / JCM 8153 / KCTC 15104).